The chain runs to 118 residues: NADH-quinone oxidoreductase subunit A (118 aa).

3 helical membrane passes run 5 to 25 (YLGI…AFAV), 61 to 81 (FLYA…YPWA), and 90 to 110 (FAIV…WYAW).

Belongs to the complex I subunit 3 family. As to quaternary structure, NDH-1 is composed of 14 different subunits. Subunits NuoA, H, J, K, L, M, N constitute the membrane sector of the complex.

It localises to the cell membrane. The catalysed reaction is a quinone + NADH + 5 H(+)(in) = a quinol + NAD(+) + 4 H(+)(out). Functionally, NDH-1 shuttles electrons from NADH, via FMN and iron-sulfur (Fe-S) centers, to quinones in the respiratory chain. The immediate electron acceptor for the enzyme in this species is believed to be a menaquinone. Couples the redox reaction to proton translocation (for every two electrons transferred, four hydrogen ions are translocated across the cytoplasmic membrane), and thus conserves the redox energy in a proton gradient. This Heliobacterium modesticaldum (strain ATCC 51547 / Ice1) protein is NADH-quinone oxidoreductase subunit A.